Reading from the N-terminus, the 325-residue chain is VSG expression site-associated protein 117A (325 aa).

An N-terminal signal peptide occupies residues Met-1–Glu-23. N-linked (GlcNAc...) asparagine glycans are attached at residues Asn-72, Asn-290, and Asn-313.

In terms of biological role, not known but may be related to activation of the variant surface glycoprotein genes. This chain is VSG expression site-associated protein 117A, found in Trypanosoma brucei brucei.